We begin with the raw amino-acid sequence, 190 residues long: Early nodulin-like protein 12 (190 aa).

The N-terminal stretch at 1–21 is a signal peptide; that stretch reads MGIIVPVLTLVFLLFAKVSHG. The Phytocyanin domain maps to 26–130; sequence RVILVGGSVG…GEKITLVVLA (105 aa). Residue Asn44 is glycosylated (N-linked (GlcNAc...) asparagine). Cysteines 84 and 118 form a disulfide. Residues 135-164 are disordered; it reads GGGSSSGDAPKVSPVSPTAQTPAPAPGPAA. Positions 151–164 are enriched in low complexity; it reads PTAQTPAPAPGPAA. Asn167 carries GPI-anchor amidated asparagine lipidation. The propeptide at 168 to 190 is removed in mature form; it reads AAVGLKVASGWFLTAVVVGLAMA.

Belongs to the early nodulin-like (ENODL) family. As to expression, confined to flowers and siliques. Expressed in female gametophytes.

The protein resides in the cell membrane. May act as a carbohydrate transporter. Required, together with ENODL11, ENODL12, ENODL13, ENODL14 and ENODL15, for male-female communication and pollen tube reception and burst at the synergid cell surface of the female gametophyte. The sequence is that of Early nodulin-like protein 12 from Arabidopsis thaliana (Mouse-ear cress).